The sequence spans 205 residues: MSSLQMSEMSKTYQYRKVMKPMLERKRRARINKCLDELKDLMVATLESEGEHVTRLEKADILELTVTHLQKMKQQRQHKRASGDESLTPAEGFRSGYIHAVNEVSRSLSQLPGMNVSLGTQLMTHLGQRLNQIQPAEKEVLPVTAPLSVHIANRDAYSVPISPISSYAGSPNSNTSSTSHSLLTTIDVTKMEDDSEDEENVWRPW.

The bHLH domain maps to 15–72 (YRKVMKPMLERKRRARINKCLDELKDLMVATLESEGEHVTRLEKADILELTVTHLQKM). Positions 93 to 126 (FRSGYIHAVNEVSRSLSQLPGMNVSLGTQLMTHL) constitute an Orange domain. Residues 202–205 (WRPW) carry the WRPW motif motif.

As to quaternary structure, homodimer. Heterodimer with dpn. Might form higher-order oligomers. Transcription repression requires formation of a complex with a corepressor protein (Groucho). As to expression, expressed in sensory organ precursors in the wing, leg and eye imaginal disk.

It is found in the nucleus. Functionally, transcriptional repressor of genes that require a bHLH protein for their transcription. May serve as a transcriptional regulator of the Achaete-scute complex (AS-C) genes. Contributes to the neural-epidermal lineage decision during early neurogenesis. Part of the Notch signaling pathway, plays a role in neuroblasts proliferation in embryos and larvae. In the larval brain, together with other self-renewal transcriptional repressors such as klu and dpn, required for type II neuroblast self-renewal and for maintaining erm in an inactive state in intermediate neural progenitors (INP) derived from type II neuroblasts. This chain is Enhancer of split mgamma protein, found in Drosophila melanogaster (Fruit fly).